We begin with the raw amino-acid sequence, 479 residues long: MSIVVKNNIHWVGQRDWEVRDFHGTEYKTLRGSSYNSYLIREEKNVLIDTVDHKFSREFVQNLRNEIDLADIDYIVINHAEEDHAGALTELMAQIPDTPIYCTANAIDSINGHHHHPEWNFNVVKTGDTLDIGNGKQLIFVETPMLHWPDSMMTYLTGDAVLFSNDAFGQHYCDEHLFNDEVDQTELFEQCQRYYANILTPFSRLVTPKITEILGFNLPVDMIATSHGVVWRDNPTQIVELYLKWAADYQEDRITIVYDTMSNNTRMMADAIAQGIAETDPRVAVKIFNVARSDKNEILTNVFRSKGVLVGTSTMNNVMMPKIAGLVEEMTGLRFRNKRASAFGSHGWSGGAVDRLSTRLQDAGFEMSLSLKAKWRPDQDALELCREHGREIARQWALAPLPQSTVNTVVEEETSAATTADLGPRMQCSVCQWIYDPAKGEPMQDVAPGTPWSEVPDNFLCPECSLGKDVFDELASEAK.

The zinc metallo-hydrolase stretch occupies residues 30–210; sequence LRGSSYNSYL…PFSRLVTPKI (181 aa). Residues His79, Glu81, Asp83, His147, Asp166, and His227 each coordinate Fe cation. Residues 254-393 form the Flavodoxin-like domain; that stretch reads ITIVYDTMSN…LCREHGREIA (140 aa). FMN-binding positions include 260 to 264 and 342 to 369; these read TMSNN and AFGS…EMSL. Residues 423 to 474 enclose the Rubredoxin-like domain; it reads GPRMQCSVCQWIYDPAKGEPMQDVAPGTPWSEVPDNFLCPECSLGKDVFDEL. 4 residues coordinate Fe cation: Cys428, Cys431, Cys461, and Cys464.

It in the N-terminal section; belongs to the zinc metallo-hydrolase group 3 family. As to quaternary structure, homotetramer. Requires Fe cation as cofactor. It depends on FMN as a cofactor.

The protein resides in the cytoplasm. The protein operates within nitrogen metabolism; nitric oxide reduction. Functionally, anaerobic nitric oxide reductase; uses NADH to detoxify nitric oxide (NO), protecting several 4Fe-4S NO-sensitive enzymes. Has at least 2 reductase partners, only one of which (NorW, flavorubredoxin reductase) has been identified. NO probably binds to the di-iron center; electrons enter from the NorW at rubredoxin and are transferred sequentially to the FMN center and the di-iron center. Also able to function as an aerobic oxygen reductase. This chain is Anaerobic nitric oxide reductase flavorubredoxin, found in Escherichia coli (strain UTI89 / UPEC).